Reading from the N-terminus, the 113-residue chain is T cell receptor alpha variable 12-2 (113 aa).

Positions 1–20 are cleaved as a signal peptide; that stretch reads MKSLRVLLVILWLQLSWVWS. The Ig-like domain occupies 23 to 113; that stretch reads KEVEQNSGPL…DSATYLCAVN (91 aa). Asparagine 43 is a glycosylation site (N-linked (GlcNAc...) asparagine). Cysteines 44 and 110 form a disulfide.

In terms of assembly, alpha-beta TR is a heterodimer composed of an alpha and beta chain; disulfide-linked. The alpha-beta TR is associated with the transmembrane signaling CD3 coreceptor proteins to form the TR-CD3 (TcR or TCR). The assembly of alpha-beta TR heterodimers with CD3 occurs in the endoplasmic reticulum where a single alpha-beta TR heterodimer associates with one CD3D-CD3E heterodimer, one CD3G-CD3E heterodimer and one CD247 homodimer forming a stable octameric structure. CD3D-CD3E and CD3G-CD3E heterodimers preferentially associate with TR alpha and TR beta chains, respectively. The association of the CD247 homodimer is the last step of TcR assembly in the endoplasmic reticulum and is required for transport to the cell surface.

It localises to the cell membrane. Its function is as follows. V region of the variable domain of T cell receptor (TR) alpha chain that participates in the antigen recognition. Alpha-beta T cell receptors are antigen specific receptors which are essential to the immune response and are present on the cell surface of T lymphocytes. Recognize peptide-major histocompatibility (MH) (pMH) complexes that are displayed by antigen presenting cells (APC), a prerequisite for efficient T cell adaptive immunity against pathogens. Binding of alpha-beta TR to pMH complex initiates TR-CD3 clustering on the cell surface and intracellular activation of LCK that phosphorylates the ITAM motifs of CD3G, CD3D, CD3E and CD247 enabling the recruitment of ZAP70. In turn ZAP70 phosphorylates LAT, which recruits numerous signaling molecules to form the LAT signalosome. The LAT signalosome propagates signal branching to three major signaling pathways, the calcium, the mitogen-activated protein kinase (MAPK) kinase and the nuclear factor NF-kappa-B (NF-kB) pathways, leading to the mobilization of transcription factors that are critical for gene expression and essential for T cell growth and differentiation. The T cell repertoire is generated in the thymus, by V-(D)-J rearrangement. This repertoire is then shaped by intrathymic selection events to generate a peripheral T cell pool of self-MH restricted, non-autoaggressive T cells. Post-thymic interaction of alpha-beta TR with the pMH complexes shapes TR structural and functional avidity. This Homo sapiens (Human) protein is T cell receptor alpha variable 12-2.